We begin with the raw amino-acid sequence, 467 residues long: 3-isopropylmalate dehydratase large subunit (467 aa).

Positions 348, 409, and 412 each coordinate [4Fe-4S] cluster.

This sequence belongs to the aconitase/IPM isomerase family. LeuC type 1 subfamily. Heterodimer of LeuC and LeuD. Requires [4Fe-4S] cluster as cofactor.

The enzyme catalyses (2R,3S)-3-isopropylmalate = (2S)-2-isopropylmalate. It functions in the pathway amino-acid biosynthesis; L-leucine biosynthesis; L-leucine from 3-methyl-2-oxobutanoate: step 2/4. Catalyzes the isomerization between 2-isopropylmalate and 3-isopropylmalate, via the formation of 2-isopropylmaleate. The sequence is that of 3-isopropylmalate dehydratase large subunit from Thiobacillus denitrificans (strain ATCC 25259 / T1).